The chain runs to 495 residues: 3-octaprenyl-4-hydroxybenzoate carboxy-lyase (495 aa).

Asn-172 lines the Mn(2+) pocket. Prenylated FMN contacts are provided by residues 175–177 (IYR), 189–191 (RWL), and 194–195 (RG). Glu-238 provides a ligand contact to Mn(2+). Residue Asp-287 is the Proton donor of the active site.

This sequence belongs to the UbiD family. Homohexamer. It depends on prenylated FMN as a cofactor. Mn(2+) serves as cofactor.

Its subcellular location is the cell membrane. The enzyme catalyses a 4-hydroxy-3-(all-trans-polyprenyl)benzoate + H(+) = a 2-(all-trans-polyprenyl)phenol + CO2. Its pathway is cofactor biosynthesis; ubiquinone biosynthesis. Catalyzes the decarboxylation of 3-octaprenyl-4-hydroxy benzoate to 2-octaprenylphenol, an intermediate step in ubiquinone biosynthesis. The protein is 3-octaprenyl-4-hydroxybenzoate carboxy-lyase of Yersinia enterocolitica serotype O:8 / biotype 1B (strain NCTC 13174 / 8081).